We begin with the raw amino-acid sequence, 374 residues long: 4-hydroxy-3-methylbut-2-en-1-yl diphosphate synthase (flavodoxin) (374 aa).

The [4Fe-4S] cluster site is built by cysteine 268, cysteine 271, cysteine 303, and glutamate 310.

The protein belongs to the IspG family. Requires [4Fe-4S] cluster as cofactor.

The enzyme catalyses (2E)-4-hydroxy-3-methylbut-2-enyl diphosphate + oxidized [flavodoxin] + H2O + 2 H(+) = 2-C-methyl-D-erythritol 2,4-cyclic diphosphate + reduced [flavodoxin]. It participates in isoprenoid biosynthesis; isopentenyl diphosphate biosynthesis via DXP pathway; isopentenyl diphosphate from 1-deoxy-D-xylulose 5-phosphate: step 5/6. In terms of biological role, converts 2C-methyl-D-erythritol 2,4-cyclodiphosphate (ME-2,4cPP) into 1-hydroxy-2-methyl-2-(E)-butenyl 4-diphosphate. In Geobacillus kaustophilus (strain HTA426), this protein is 4-hydroxy-3-methylbut-2-en-1-yl diphosphate synthase (flavodoxin).